Here is a 433-residue protein sequence, read N- to C-terminus: Ribonuclease T2-like (433 aa).

Disulfide bonds link C28–C47, C36–C95, C46–C171, and C103–C163. 2 N-linked (GlcNAc...) asparagine glycosylation sites follow: N38 and N71. Active-site residues include H88, E156, and H160. N221 and N263 each carry an N-linked (GlcNAc...) asparagine glycan. A disulfide bond links C247 and C283.

This sequence belongs to the RNase T2 family.

Its subcellular location is the vacuole lumen. The protein resides in the cytoplasm. The catalysed reaction is a ribonucleotidyl-ribonucleotide-RNA + H2O = a 3'-end 3'-phospho-ribonucleotide-RNA + a 5'-end dephospho-ribonucleoside-RNA + H(+). In terms of biological role, rnase which modulates cell survival under stress conditions. Released from the vacuole to the cytoplasm during stress to promote tRNA and rRNA cleavage and to activate separately a downstream pathway that promotes cell death. Involved in cell size, vacuolar morphology and growth at high temperatures and high salt concentration. The chain is Ribonuclease T2-like (RNY1) from Candida glabrata (strain ATCC 2001 / BCRC 20586 / JCM 3761 / NBRC 0622 / NRRL Y-65 / CBS 138) (Yeast).